The following is a 245-amino-acid chain: uncharacterized protein (245 aa).

This is an uncharacterized protein from Rhodobacter capsulatus (Rhodopseudomonas capsulata).